The following is a 216-amino-acid chain: Peptide methionine sulfoxide reductase MsrA (216 aa).

C54 is a catalytic residue.

The protein belongs to the MsrA Met sulfoxide reductase family.

It carries out the reaction L-methionyl-[protein] + [thioredoxin]-disulfide + H2O = L-methionyl-(S)-S-oxide-[protein] + [thioredoxin]-dithiol. The catalysed reaction is [thioredoxin]-disulfide + L-methionine + H2O = L-methionine (S)-S-oxide + [thioredoxin]-dithiol. Functionally, has an important function as a repair enzyme for proteins that have been inactivated by oxidation. Catalyzes the reversible oxidation-reduction of methionine sulfoxide in proteins to methionine. This chain is Peptide methionine sulfoxide reductase MsrA, found in Xylella fastidiosa (strain M12).